Reading from the N-terminus, the 324-residue chain is Holliday junction branch migration complex subunit RuvB (324 aa).

The segment at 1-180 (MKSISCGKEY…FGIPLHLEFY (180 aa)) is large ATPase domain (RuvB-L). Residues Ile19, Arg20, Gly61, Lys64, Thr65, Thr66, 127 to 129 (EDF), Arg170, Tyr180, and Arg217 each bind ATP. Thr65 contributes to the Mg(2+) binding site. Residues 181 to 251 (SFEELVNIIK…VADSVLLKLG (71 aa)) are small ATPAse domain (RuvB-S). A head domain (RuvB-H) region spans residues 254 to 324 (KMGLNKLDMN…TDQAKEYLSL (71 aa)). The DNA site is built by Arg307 and Arg312.

It belongs to the RuvB family. Homohexamer. Forms an RuvA(8)-RuvB(12)-Holliday junction (HJ) complex. HJ DNA is sandwiched between 2 RuvA tetramers; dsDNA enters through RuvA and exits via RuvB. An RuvB hexamer assembles on each DNA strand where it exits the tetramer. Each RuvB hexamer is contacted by two RuvA subunits (via domain III) on 2 adjacent RuvB subunits; this complex drives branch migration. In the full resolvosome a probable DNA-RuvA(4)-RuvB(12)-RuvC(2) complex forms which resolves the HJ.

The protein localises to the cytoplasm. It catalyses the reaction ATP + H2O = ADP + phosphate + H(+). In terms of biological role, the RuvA-RuvB-RuvC complex processes Holliday junction (HJ) DNA during genetic recombination and DNA repair, while the RuvA-RuvB complex plays an important role in the rescue of blocked DNA replication forks via replication fork reversal (RFR). RuvA specifically binds to HJ cruciform DNA, conferring on it an open structure. The RuvB hexamer acts as an ATP-dependent pump, pulling dsDNA into and through the RuvAB complex. RuvB forms 2 homohexamers on either side of HJ DNA bound by 1 or 2 RuvA tetramers; 4 subunits per hexamer contact DNA at a time. Coordinated motions by a converter formed by DNA-disengaged RuvB subunits stimulates ATP hydrolysis and nucleotide exchange. Immobilization of the converter enables RuvB to convert the ATP-contained energy into a lever motion, pulling 2 nucleotides of DNA out of the RuvA tetramer per ATP hydrolyzed, thus driving DNA branch migration. The RuvB motors rotate together with the DNA substrate, which together with the progressing nucleotide cycle form the mechanistic basis for DNA recombination by continuous HJ branch migration. Branch migration allows RuvC to scan DNA until it finds its consensus sequence, where it cleaves and resolves cruciform DNA. The chain is Holliday junction branch migration complex subunit RuvB from Wolbachia sp. subsp. Drosophila simulans (strain wRi).